The following is a 517-amino-acid chain: General transcription factor IIF subunit 1 (517 aa).

Ala-2 carries the post-translational modification N-acetylalanine. Position 156 is a phosphothreonine (Thr-156). Residues 178–466 (QQRRLKDQDQ…DAVRRYLTRK (289 aa)) form a disordered region. Residues Ser-217, Ser-218, Ser-221, and Ser-224 each carry the phosphoserine modification. Residues 232 to 251 (PKAKKKAPLAKGGRKKKKKK) are compositionally biased toward basic residues. 2 stretches are compositionally biased toward acidic residues: residues 255–270 (DEAF…EGQE) and 303–325 (EQSD…EEEE). Residue Thr-331 is modified to Phosphothreonine. The segment covering 343-355 (EESDSSEESDIDS) has biased composition (acidic residues). The span at 364-374 (AKKKTPPKRER) shows a compositional bias: basic residues. A phosphoserine mark is found at Ser-377, Ser-380, Ser-381, and Ser-385. A compositionally biased stretch (low complexity) spans 377–391 (SGGSSRGNSRPGTPS). Thr-389 carries the post-translational modification Phosphothreonine. Ser-391 is modified (phosphoserine). At Lys-407 the chain carries N6-acetyllysine. The span at 428 to 452 (GPQSLSGKSTPQPPSGKTTPNSGDV) shows a compositional bias: polar residues. A phosphoserine mark is found at Ser-431, Ser-433, and Ser-436. Phosphothreonine occurs at positions 437 and 446. Ser-449 carries the phosphoserine modification. Zn(2+) is bound by residues Glu-503, His-512, and Glu-517.

The protein belongs to the TFIIF alpha subunit family. As to quaternary structure, heterodimer of an alpha and a beta subunit. Interacts with GTF2F2, CTDP1, TAF6/TAFII80 and URI1. Interacts with GTF2B (via C-terminus and preferentially via acetylated form); this interaction prevents binding of GTF2B to GTF2F2. Part of TBP-based Pol II pre-initiation complex (PIC), in which Pol II core assembles with general transcription factors and other specific initiation factors including GTF2E1, GTF2E2, GTF2F1, GTF2F2, TCEA1, ERCC2, ERCC3, GTF2H2, GTF2H3, GTF2H4, GTF2H5, GTF2A1, GTF2A2, GTF2B and TBP; this large multi-subunit PIC complex mediates DNA unwinding and targets Pol II core to the transcription start site where the first phosphodiester bond forms. Post-translationally, phosphorylated on Ser and other residues by TAF1 and casein kinase II-like kinases.

The protein localises to the nucleus. TFIIF is a general transcription initiation factor that binds to RNA polymerase II and helps to recruit it to the initiation complex in collaboration with TFIIB. It promotes transcription elongation. The chain is General transcription factor IIF subunit 1 (GTF2F1) from Homo sapiens (Human).